A 578-amino-acid chain; its full sequence is Trehalase (578 aa).

The N-terminal stretch at 1 to 19 is a signal peptide; that stretch reads MPGSTWELHLLLLLGLGLG. N78 carries N-linked (GlcNAc...) asparagine glycosylation. Substrate contacts are provided by residues R168, 175 to 176, N212, and 221 to 223; these read WD and RSQ. A glycan (N-linked (GlcNAc...) asparagine) is linked at N261. Substrate contacts are provided by residues 286–288 and G319; that span reads RPE. D321 acts as the Proton donor/acceptor in catalysis. N-linked (GlcNAc...) asparagine glycosylation occurs at N369. The active-site Proton donor/acceptor is E514. E528 contacts substrate. The GPI-anchor amidated serine moiety is linked to residue S555. Positions 556–578 are cleaved as a propeptide — removed in mature form; it reads GTQLALLEPHCLAAALLLSFLTR.

It belongs to the glycosyl hydrolase 37 family. As to quaternary structure, homodimer; disulfide-linked. Expressed in small intestine, kidney, and to a lesser extent in liver.

It localises to the cell membrane. The catalysed reaction is alpha,alpha-trehalose + H2O = alpha-D-glucose + beta-D-glucose. Functionally, intestinal trehalase is probably involved in the hydrolysis of ingested trehalose. The sequence is that of Trehalase (TREH) from Oryctolagus cuniculus (Rabbit).